A 514-amino-acid chain; its full sequence is Serine--tRNA ligase, cytoplasmic (514 aa).

Methionine 1 bears the N-acetylmethionine mark. Residues arginine 9–serine 61 form an interaction with tRNA region. A Phosphoserine modification is found at serine 241. The L-serine site is built by threonine 271 and arginine 302. ATP is bound by residues arginine 302–glutamate 304 and valine 318–phenylalanine 321. The residue at position 323 (lysine 323) is an N6-acetyllysine. Position 325 (glutamate 325) interacts with L-serine. Glutamate 391–serine 394 lines the ATP pocket. Asparagine 427 serves as a coordination point for L-serine. A disordered region spans residues proline 473 to alanine 514. Over residues glutamate 479–leucine 502 the composition is skewed to basic and acidic residues. Residues lysine 482–lysine 494 carry the Nuclear localization signal motif. A compositionally biased stretch (polar residues) spans asparagine 504–alanine 514.

This sequence belongs to the class-II aminoacyl-tRNA synthetase family. Type-1 seryl-tRNA synthetase subfamily. Homodimer. The tRNA molecule may bind across the dimer. Interacts with SIRT2. Interacts with METTL6; interaction is required for the tRNA N(3)-methylcytidine methyltransferase activity of METTL6. In terms of tissue distribution, brain.

It is found in the cytoplasm. Its subcellular location is the nucleus. It carries out the reaction tRNA(Ser) + L-serine + ATP = L-seryl-tRNA(Ser) + AMP + diphosphate + H(+). The catalysed reaction is tRNA(Sec) + L-serine + ATP = L-seryl-tRNA(Sec) + AMP + diphosphate + H(+). It functions in the pathway aminoacyl-tRNA biosynthesis; selenocysteinyl-tRNA(Sec) biosynthesis; L-seryl-tRNA(Sec) from L-serine and tRNA(Sec): step 1/1. In terms of biological role, catalyzes the attachment of serine to tRNA(Ser) in a two-step reaction: serine is first activated by ATP to form Ser-AMP and then transferred to the acceptor end of tRNA(Ser). Is probably also able to aminoacylate tRNA(Sec) with serine, to form the misacylated tRNA L-seryl-tRNA(Sec), which will be further converted into selenocysteinyl-tRNA(Sec). In the nucleus, binds to the VEGFA core promoter and prevents MYC binding and transcriptional activation by MYC. Recruits SIRT2 to the VEGFA promoter, promoting deacetylation of histone H4 at 'Lys-16' (H4K16). Thereby, inhibits the production of VEGFA and sprouting angiogenesis mediated by VEGFA. The chain is Serine--tRNA ligase, cytoplasmic from Homo sapiens (Human).